The sequence spans 428 residues: 2-isopropylmalate synthase 2 (428 aa).

Residues P40–Y302 form the Pyruvate carboxyltransferase domain. Mn(2+)-binding residues include D49, H241, H243, and N277.

The protein belongs to the alpha-IPM synthase/homocitrate synthase family. LeuA type 1 subfamily. As to quaternary structure, homodimer. Mn(2+) serves as cofactor.

The protein resides in the cytoplasm. It carries out the reaction 3-methyl-2-oxobutanoate + acetyl-CoA + H2O = (2S)-2-isopropylmalate + CoA + H(+). Its pathway is amino-acid biosynthesis; L-leucine biosynthesis; L-leucine from 3-methyl-2-oxobutanoate: step 1/4. In terms of biological role, catalyzes the condensation of the acetyl group of acetyl-CoA with 3-methyl-2-oxobutanoate (2-ketoisovalerate) to form 3-carboxy-3-hydroxy-4-methylpentanoate (2-isopropylmalate). Has high alpha-isopropylmalate synthase activity and low citramalate synthase activity. This Leptospira interrogans serogroup Icterohaemorrhagiae serovar Lai (strain 56601) protein is 2-isopropylmalate synthase 2.